Consider the following 285-residue polypeptide: Probable endonuclease 4 (285 aa).

Residues His-69, His-109, Glu-145, Asp-179, His-182, His-216, Asp-229, His-231, and Glu-261 each contribute to the Zn(2+) site.

The protein belongs to the AP endonuclease 2 family. Zn(2+) serves as cofactor.

It catalyses the reaction Endonucleolytic cleavage to 5'-phosphooligonucleotide end-products.. In terms of biological role, endonuclease IV plays a role in DNA repair. It cleaves phosphodiester bonds at apurinic or apyrimidinic (AP) sites, generating a 3'-hydroxyl group and a 5'-terminal sugar phosphate. The protein is Probable endonuclease 4 of Citrobacter koseri (strain ATCC BAA-895 / CDC 4225-83 / SGSC4696).